Reading from the N-terminus, the 337-residue chain is Biotin synthase (337 aa).

The 230-residue stretch at 55–284 (YFKNTIELCS…KKTILLAGGK (230 aa)) folds into the Radical SAM core domain. Residues cysteine 73, cysteine 77, and cysteine 80 each contribute to the [4Fe-4S] cluster site. Cysteine 117, cysteine 149, and cysteine 209 together coordinate [2Fe-2S] cluster.

The protein belongs to the radical SAM superfamily. Biotin synthase family. Homodimer. [4Fe-4S] cluster serves as cofactor. [2Fe-2S] cluster is required as a cofactor.

It carries out the reaction (4R,5S)-dethiobiotin + (sulfur carrier)-SH + 2 reduced [2Fe-2S]-[ferredoxin] + 2 S-adenosyl-L-methionine = (sulfur carrier)-H + biotin + 2 5'-deoxyadenosine + 2 L-methionine + 2 oxidized [2Fe-2S]-[ferredoxin]. Its pathway is cofactor biosynthesis; biotin biosynthesis; biotin from 7,8-diaminononanoate: step 2/2. Catalyzes the conversion of dethiobiotin (DTB) to biotin by the insertion of a sulfur atom into dethiobiotin via a radical-based mechanism. In Caldicellulosiruptor bescii (strain ATCC BAA-1888 / DSM 6725 / KCTC 15123 / Z-1320) (Anaerocellum thermophilum), this protein is Biotin synthase.